A 2104-amino-acid polypeptide reads, in one-letter code: Transmembrane matrix receptor MUP-4 (2104 aa).

The N-terminal stretch at 1 to 15 (MRWVPLVLLPLIASA) is a signal peptide. Over 16–1860 (ATTYQHRQTY…FCETAPSNLP (1845 aa)) the chain is Extracellular. 3 consecutive EGF-like domains span residues 71–110 (VVNECARPSLNACHKDAQCVDLAEGYTCRCNSGFADTSPD), 122–163 (TTNE…VSTS), and 175–213 (SVNECTNGEADCSNNADCFDRADGYECKCRPGFVDASPN). 6 cysteine pairs are disulfide-bonded: C75-C89, C83-C98, C126-C142, C136-C151, C179-C192, and C186-C201. A WR1 domain is found at 220–265 (RVCNKPKAPEYYGQQSRQPQCSEGSGCGPNEECRFNTAGEKVCQCR). 3 consecutive EGF-like domains span residues 278–315 (VFSQCEQANECDRNAFCSNTYDGPKCQCKDGFLDVSPD), 327–360 (VRNECADGSHDCSHQAACQDTPTGYICSCNSNCI), and 377–416 (AANQCSDKSLNSCDENADCVQLPDGYTCKCFAGYVDVSSN). 7 cysteine pairs are disulfide-bonded: C282/C294, C288/C303, C331/C344, C338/C353, C355/C359, C381/C395, and C389/C404. The VWFA domain maps to 437-612 (DLVFLIDGSG…DLNTRLRSAI (176 aa)). Residues N494 and N556 are each glycosylated (N-linked (GlcNAc...) asparagine). EGF-like domains lie at 728-772 (SNDE…NKCE) and 819-857 (LIDECAAGVADCDPNAKCTDTDESYICTCNEGFLDKSPE). Cystine bridges form between C732–C746, C740–C756, C758–C771, C823–C836, C830–C845, C873–C886, C880–C895, C923–C937, C931–C946, C972–C985, C979–C995, C1020–C1034, C1028–C1046, C1075–C1089, C1083–C1098, C1125–C1139, C1133–C1148, C1173–C1187, C1181–C1196, C1219–C1233, and C1227–C1242. In terms of domain architecture, EGF-like 9; calcium-binding spans 869-907 (QRNECLDGTHNCSMNADCIDLPDGFLCRCKEDFVDISPN). N-linked (GlcNAc...) asparagine glycosylation occurs at N879. EGF-like domains are found at residues 919–958 (LVNECLITGGHNCHEHAICIDTRDSYKCQCKEGYVDHDEL), 968–1007 (LNQICESGKHECDKNARCVEKGANDYECVCNAGFIDKSPL), 1016–1058 (VEPI…VGAV), 1071–1110 (LVNECLSASLNSCDAAATCIDLDDGYTCKCPLGSKDESPV), 1121–1160 (LVNECNIPHLNNCSHFATCIDLEEGYECKCKPEYHDQKPE), 1169–1208 (IINECLAENLNDCSPNAMCIDKIDGYDCKCKAPFQDEMPS), and 1215–1254 (RFDECADPKDNDCDKHALCIDTDDSYTCQCKEGFFDEISD). N1037 is a glycosylation site (N-linked (GlcNAc...) asparagine). N1132 is a glycosylation site (N-linked (GlcNAc...) asparagine). N-linked (GlcNAc...) asparagine glycans are attached at residues N1271, N1403, and N1576. SEA domains lie at 1322 to 1444 (PTTS…DDAD) and 1495 to 1620 (AVES…PEQL). EGF-like domains lie at 1622-1658 (PFSNCYHSDCHPDAICKEVGKGYTCTCPDGFRDLNPS), 1669-1705 (GVNECEKPELNECSPHARCIDLDYLYKCECIRPYVNS), and 1717-1754 (SIDYCQDVNYCPLNSTCVNVDEQARCDCKPGFVDLRKS). Intrachain disulfides connect C1626–C1637, C1631–C1646, C1673–C1687, C1681–C1696, C1721–C1733, C1727–C1742, C1776–C1789, C1783–C1798, C1821–C1830, C1824–C1841, and C1843–C1852. N-linked (GlcNAc...) asparagine glycans are attached at residues N1730 and N1782. Positions 1772-1810 (DIDECALGLHNCSAAAICIDKKIGYECQCQEGYEDGNPS) constitute an EGF-like 20; calcium-binding domain. The EGF-like 21 domain maps to 1817–1853 (AASLCGLCNGHGDCIHDALSSNVTCACLDGYTGQFCE). N1838 carries N-linked (GlcNAc...) asparagine glycosylation. Residues 1861–1881 (LILMTLLALLFLLLTLLCCLY) traverse the membrane as a helical segment. The Cytoplasmic portion of the chain corresponds to 1882 to 2104 (MCARCRCFGA…TTKAEEVNYF (223 aa)). Residues 2031 to 2040 (SGAMMSSASG) show a composition bias toward low complexity. The segment at 2031 to 2104 (SGAMMSSASG…TTKAEEVNYF (74 aa)) is disordered. Basic and acidic residues-rich tracts occupy residues 2062–2076 (VYDRTTRTNQSHDFE) and 2083–2104 (TGTERSKREFVTTTKAEEVNYF).

As to expression, abundant at hypodermal cell-matrix junctions overlying muscle of threefold embryos. Expression continues in body wall muscle in larvae and adults and is also detected in other regions where cells show mechanical attachment to the hypodermis including the inner surface of the pharynx, overlying anal and intestinal muscles, overlying vulval and uterine sex muscles, male tail muscle attachment zones and the six mechanosensory neurons (at protein level).

The protein localises to the cell junction. Its subcellular location is the hemidesmosome. It is found in the cytoplasm. The protein resides in the cytoskeleton. It localises to the cell membrane. In terms of biological role, required for junctional attachments between hypodermis and muscle, and between the apical epithelial surface and the cuticular matrix. Essential for enclosure of the embryo by the hypodermis, hypodermal integrity, embryo elongation, and maintenance of hypodermal morphology in fully elongated embryos. The chain is Transmembrane matrix receptor MUP-4 from Caenorhabditis elegans.